Here is a 145-residue protein sequence, read N- to C-terminus: uncharacterized protein (145 aa).

This is an uncharacterized protein from Saccharomyces cerevisiae (strain ATCC 204508 / S288c) (Baker's yeast).